A 235-amino-acid chain; its full sequence is Peptidyl-tRNA hydrolase (235 aa).

Tyrosine 14 provides a ligand contact to tRNA. Catalysis depends on histidine 19, which acts as the Proton acceptor. The tRNA site is built by phenylalanine 64, asparagine 66, and asparagine 112. The disordered stretch occupies residues 186–235 (RTAPPRSSGGSPKTDKPAKATREPPPAAKPEATPEEETRSPLQRLVDKFR). A compositionally biased stretch (basic and acidic residues) spans 198–207 (KTDKPAKATR).

It belongs to the PTH family. Monomer.

Its subcellular location is the cytoplasm. The catalysed reaction is an N-acyl-L-alpha-aminoacyl-tRNA + H2O = an N-acyl-L-amino acid + a tRNA + H(+). In terms of biological role, hydrolyzes ribosome-free peptidyl-tRNAs (with 1 or more amino acids incorporated), which drop off the ribosome during protein synthesis, or as a result of ribosome stalling. Functionally, catalyzes the release of premature peptidyl moieties from peptidyl-tRNA molecules trapped in stalled 50S ribosomal subunits, and thus maintains levels of free tRNAs and 50S ribosomes. The polypeptide is Peptidyl-tRNA hydrolase (Dinoroseobacter shibae (strain DSM 16493 / NCIMB 14021 / DFL 12)).